We begin with the raw amino-acid sequence, 88 residues long: Small ribosomal subunit protein uS15 (88 aa).

Positions 1 to 12 are enriched in basic and acidic residues; it reads MITQEEQQKIID. The tract at residues 1–24 is disordered; it reads MITQEEQQKIIDRFGNGPNDTGTP.

The protein belongs to the universal ribosomal protein uS15 family. Part of the 30S ribosomal subunit. Forms a bridge to the 50S subunit in the 70S ribosome, contacting the 23S rRNA.

One of the primary rRNA binding proteins, it binds directly to 16S rRNA where it helps nucleate assembly of the platform of the 30S subunit by binding and bridging several RNA helices of the 16S rRNA. In terms of biological role, forms an intersubunit bridge (bridge B4) with the 23S rRNA of the 50S subunit in the ribosome. This is Small ribosomal subunit protein uS15 from Salinibacter ruber (strain DSM 13855 / M31).